The chain runs to 366 residues: Spermine synthase (366 aa).

Ala2 carries the post-translational modification N-acetylalanine. Ser57 bears the Phosphoserine mark. The PABS domain occupies 122 to 362; that stretch reads RYWPTADGRL…ELWVFYTVWK (241 aa). Gln148 is an S-adenosyl 3-(methylsulfanyl)propylamine binding site. Spermidine-binding residues include Tyr177 and Asp201. S-adenosyl 3-(methylsulfanyl)propylamine is bound by residues Glu220 and 255–256; that span reads DC. Residue Asp276 is the Proton acceptor of the active site. Spermidine is bound by residues Tyr351 and Glu353.

It belongs to the spermidine/spermine synthase family. As to quaternary structure, homodimer. Dimerization is mediated through the N-terminal domain and seems to be required for activity as deletion of the N-terminal domain causes complete loss of activity.

It catalyses the reaction S-adenosyl 3-(methylsulfanyl)propylamine + spermidine = spermine + S-methyl-5'-thioadenosine + H(+). The protein operates within amine and polyamine biosynthesis; spermine biosynthesis; spermine from spermidine: step 1/1. Functionally, catalyzes the production of spermine from spermidine and decarboxylated S-adenosylmethionine (dcSAM). Required for normal viability, growth and fertility. In Mus musculus (Mouse), this protein is Spermine synthase (Sms).